The chain runs to 93 residues: Stromal cell-derived factor 1 (93 aa).

The first 21 residues, 1-21, serve as a signal peptide directing secretion; sequence MDIRTLALFSILLGSLCLSEG. The Receptor activation motif motif lies at 22 to 23; sequence KP. The tract at residues 29-33 is receptor and heparin binding; the sequence is RCPCR. 2 disulfides stabilise this stretch: Cys30–Cys55 and Cys32–Cys71. Heparin is bound by residues 41–51, Arg62, Gln69, and Lys85; that span reads KSNIKHLKILS. Receptor binding regions lie at residues 48 to 50 and 60 to 64; these read KIL and VARLK.

It belongs to the intercrine alpha (chemokine CxC) family. In terms of assembly, monomer or homodimer; in equilibrium. Dimer formation is induced by non acidic pH and the presence of multivalent anions, and by binding to cxcr4 or heparin.

The protein localises to the secreted. In terms of biological role, chemoattractant. Activates the C-X-C chemokine receptor cxcr4 to induce a rapid and transient rise in the level of intracellular calcium ions, and chemotaxis. Signaling with cxcr4 mediates the directional movement of mesodermal cells during gastrulation. Binds to the allosteric site (site 2) of integrins and activates them in a cxcr4-independent manner. The chain is Stromal cell-derived factor 1 from Xenopus tropicalis (Western clawed frog).